The primary structure comprises 264 residues: Phosphonates import ATP-binding protein PhnC (264 aa).

An ABC transporter domain is found at 3–246; that stretch reads IRLQEAGLRH…MLDALYANEQ (244 aa). 35–42 provides a ligand contact to ATP; the sequence is GPSGAGKS.

This sequence belongs to the ABC transporter superfamily. Phosphonates importer (TC 3.A.1.9.1) family. The complex is composed of two ATP-binding proteins (PhnC), two transmembrane proteins (PhnE) and a solute-binding protein (PhnD).

It localises to the cell inner membrane. The enzyme catalyses phosphonate(out) + ATP + H2O = phosphonate(in) + ADP + phosphate + H(+). Part of the ABC transporter complex PhnCDE involved in phosphonates import. Responsible for energy coupling to the transport system. The polypeptide is Phosphonates import ATP-binding protein PhnC (Pseudomonas entomophila (strain L48)).